Here is a 564-residue protein sequence, read N- to C-terminus: Potassium-transporting ATPase potassium-binding subunit (564 aa).

A run of 10 helical transmembrane segments spans residues 4 to 24 (HEIL…PFLG), 67 to 87 (TLAL…ILML), 135 to 155 (VGLT…LVAL), 179 to 199 (LYVL…QGVP), 258 to 278 (FEVA…GHYV), 286 to 306 (AILG…LWAE), 376 to 396 (IFGG…IAVF), 420 to 440 (LLVF…AIAA), 487 to 507 (LMIG…ILAI), and 528 to 548 (GPLF…LTFL).

It belongs to the KdpA family. As to quaternary structure, the system is composed of three essential subunits: KdpA, KdpB and KdpC.

The protein localises to the cell inner membrane. Part of the high-affinity ATP-driven potassium transport (or Kdp) system, which catalyzes the hydrolysis of ATP coupled with the electrogenic transport of potassium into the cytoplasm. This subunit binds the periplasmic potassium ions and delivers the ions to the membrane domain of KdpB through an intramembrane tunnel. This chain is Potassium-transporting ATPase potassium-binding subunit, found in Pseudomonas aeruginosa (strain ATCC 15692 / DSM 22644 / CIP 104116 / JCM 14847 / LMG 12228 / 1C / PRS 101 / PAO1).